Here is a 476-residue protein sequence, read N- to C-terminus: Bifunctional protein HldE (476 aa).

Residues 1–319 (MKVTLPAFEK…GALASHQGES (319 aa)) form a ribokinase region. 195-198 (NMSE) is an ATP binding site. Aspartate 264 is an active-site residue. The cytidylyltransferase stretch occupies residues 345–476 (MTNGCFDILH…SIIQNIMARQ (132 aa)).

It in the N-terminal section; belongs to the carbohydrate kinase PfkB family. This sequence in the C-terminal section; belongs to the cytidylyltransferase family. In terms of assembly, homodimer.

It carries out the reaction D-glycero-beta-D-manno-heptose 7-phosphate + ATP = D-glycero-beta-D-manno-heptose 1,7-bisphosphate + ADP + H(+). The enzyme catalyses D-glycero-beta-D-manno-heptose 1-phosphate + ATP + H(+) = ADP-D-glycero-beta-D-manno-heptose + diphosphate. It functions in the pathway nucleotide-sugar biosynthesis; ADP-L-glycero-beta-D-manno-heptose biosynthesis; ADP-L-glycero-beta-D-manno-heptose from D-glycero-beta-D-manno-heptose 7-phosphate: step 1/4. The protein operates within nucleotide-sugar biosynthesis; ADP-L-glycero-beta-D-manno-heptose biosynthesis; ADP-L-glycero-beta-D-manno-heptose from D-glycero-beta-D-manno-heptose 7-phosphate: step 3/4. Functionally, catalyzes the phosphorylation of D-glycero-D-manno-heptose 7-phosphate at the C-1 position to selectively form D-glycero-beta-D-manno-heptose-1,7-bisphosphate. In terms of biological role, catalyzes the ADP transfer from ATP to D-glycero-beta-D-manno-heptose 1-phosphate, yielding ADP-D-glycero-beta-D-manno-heptose. The sequence is that of Bifunctional protein HldE from Shewanella denitrificans (strain OS217 / ATCC BAA-1090 / DSM 15013).